A 194-amino-acid chain; its full sequence is Crossover junction endodeoxyribonuclease RuvC (194 aa).

Active-site residues include Asp8, Glu72, and Asp144. Asp8, Glu72, and Asp144 together coordinate Mg(2+).

The protein belongs to the RuvC family. In terms of assembly, homodimer which binds Holliday junction (HJ) DNA. The HJ becomes 2-fold symmetrical on binding to RuvC with unstacked arms; it has a different conformation from HJ DNA in complex with RuvA. In the full resolvosome a probable DNA-RuvA(4)-RuvB(12)-RuvC(2) complex forms which resolves the HJ. Mg(2+) serves as cofactor.

Its subcellular location is the cytoplasm. It catalyses the reaction Endonucleolytic cleavage at a junction such as a reciprocal single-stranded crossover between two homologous DNA duplexes (Holliday junction).. Functionally, the RuvA-RuvB-RuvC complex processes Holliday junction (HJ) DNA during genetic recombination and DNA repair. Endonuclease that resolves HJ intermediates. Cleaves cruciform DNA by making single-stranded nicks across the HJ at symmetrical positions within the homologous arms, yielding a 5'-phosphate and a 3'-hydroxyl group; requires a central core of homology in the junction. The consensus cleavage sequence is 5'-(A/T)TT(C/G)-3'. Cleavage occurs on the 3'-side of the TT dinucleotide at the point of strand exchange. HJ branch migration catalyzed by RuvA-RuvB allows RuvC to scan DNA until it finds its consensus sequence, where it cleaves and resolves the cruciform DNA. This chain is Crossover junction endodeoxyribonuclease RuvC, found in Psychrobacter sp. (strain PRwf-1).